Here is a 123-residue protein sequence, read N- to C-terminus: UPF0102 protein Cbei_1183 (123 aa).

Belongs to the UPF0102 family.

The chain is UPF0102 protein Cbei_1183 from Clostridium beijerinckii (strain ATCC 51743 / NCIMB 8052) (Clostridium acetobutylicum).